Reading from the N-terminus, the 158-residue chain is Sporulation-delaying protein SdpA (158 aa).

The protein localises to the cytoplasm. In terms of biological role, required for the maturation of SdpC to SDP. Not required for SdpC signal peptide cleavage, secretion from the cell or disulfide bond formation. This is Sporulation-delaying protein SdpA from Bacillus subtilis (strain 168).